Here is a 258-residue protein sequence, read N- to C-terminus: Nuclear egress protein 2 (258 aa).

At 1–228 the chain is on the perinuclear space side; that stretch reads MLKEKMYDEL…TVPIFARRNN (228 aa). A helical membrane pass occupies residues 229–249; the sequence is ILCGFLVAALLIVCYVIFKEF. Residues 250 to 258 are Nuclear-facing; the sequence is ALSADFSAV.

This sequence belongs to the herpesviridae NEC2 protein family. As to quaternary structure, forms a heterohexameric complex with NEC1. Phosphorylated.

It localises to the host nucleus inner membrane. Plays an essential role in virion nuclear egress, the first step of virion release from infected cell. Within the host nucleus, NEC1 interacts with the newly formed capsid through the vertexes and directs it to the inner nuclear membrane by associating with NEC2. Induces the budding of the capsid at the inner nuclear membrane as well as its envelopment into the perinuclear space. There, the NEC1/NEC2 complex promotes the fusion of the enveloped capsid with the outer nuclear membrane and the subsequent release of the viral capsid into the cytoplasm where it will reach the secondary budding sites in the host Golgi or trans-Golgi network. The chain is Nuclear egress protein 2 from Homo sapiens (Human).